The following is a 348-amino-acid chain: Dihydroorotate dehydrogenase (quinone) (348 aa).

FMN-binding positions include 65 to 69 and T89; that span reads AGMDK. K69 lines the substrate pocket. 114–118 provides a ligand contact to substrate; it reads NRMGF. 2 residues coordinate FMN: N143 and N176. N176 provides a ligand contact to substrate. The active-site Nucleophile is S179. N181 lines the substrate pocket. FMN-binding residues include K221 and T249. Residue 250 to 251 coordinates substrate; the sequence is NT. FMN contacts are provided by residues G272, G301, and 322-323; that span reads YT.

This sequence belongs to the dihydroorotate dehydrogenase family. Type 2 subfamily. Monomer. FMN is required as a cofactor.

Its subcellular location is the cell membrane. It carries out the reaction (S)-dihydroorotate + a quinone = orotate + a quinol. The protein operates within pyrimidine metabolism; UMP biosynthesis via de novo pathway; orotate from (S)-dihydroorotate (quinone route): step 1/1. Its function is as follows. Catalyzes the conversion of dihydroorotate to orotate with quinone as electron acceptor. The polypeptide is Dihydroorotate dehydrogenase (quinone) (Akkermansia muciniphila (strain ATCC BAA-835 / DSM 22959 / JCM 33894 / BCRC 81048 / CCUG 64013 / CIP 107961 / Muc)).